A 128-amino-acid chain; its full sequence is Large ribosomal subunit protein bL17 (128 aa).

It belongs to the bacterial ribosomal protein bL17 family. Part of the 50S ribosomal subunit. Contacts protein L32.

The sequence is that of Large ribosomal subunit protein bL17 from Streptococcus uberis (strain ATCC BAA-854 / 0140J).